A 383-amino-acid polypeptide reads, in one-letter code: Putative F-box protein At3g22650 (383 aa).

Residues 3 to 50 (SCERSLLPIDIIEEICCRIPVEYLTQFKLTCKQWFALLKDKRFIYKYL) enclose the F-box domain.

This Arabidopsis thaliana (Mouse-ear cress) protein is Putative F-box protein At3g22650.